A 186-amino-acid chain; its full sequence is Peptidyl-tRNA hydrolase (186 aa).

Tyrosine 13 serves as a coordination point for tRNA. Histidine 18 acts as the Proton acceptor in catalysis. TRNA is bound by residues tyrosine 59, asparagine 61, and asparagine 107.

The protein belongs to the PTH family. In terms of assembly, monomer.

It is found in the cytoplasm. The catalysed reaction is an N-acyl-L-alpha-aminoacyl-tRNA + H2O = an N-acyl-L-amino acid + a tRNA + H(+). Hydrolyzes ribosome-free peptidyl-tRNAs (with 1 or more amino acids incorporated), which drop off the ribosome during protein synthesis, or as a result of ribosome stalling. Functionally, catalyzes the release of premature peptidyl moieties from peptidyl-tRNA molecules trapped in stalled 50S ribosomal subunits, and thus maintains levels of free tRNAs and 50S ribosomes. The chain is Peptidyl-tRNA hydrolase from Thermotoga sp. (strain RQ2).